We begin with the raw amino-acid sequence, 353 residues long: NADH-quinone oxidoreductase subunit H (353 aa).

The next 9 helical transmembrane spans lie at 8-28 (LLVY…LFIW), 75-95 (GVFW…FAAI), 108-128 (IGIL…FMAG), 148-168 (VSYE…TGSL), 178-198 (SVPF…AAMA), 229-249 (LFYL…TTLF), 258-278 (LHPV…IIWV), 297-317 (FLLP…LAAP), and 319-339 (MNTA…ILLF).

The protein belongs to the complex I subunit 1 family. As to quaternary structure, NDH-1 is composed of 14 different subunits. Subunits NuoA, H, J, K, L, M, N constitute the membrane sector of the complex.

The protein localises to the cell membrane. It carries out the reaction a quinone + NADH + 5 H(+)(in) = a quinol + NAD(+) + 4 H(+)(out). In terms of biological role, NDH-1 shuttles electrons from NADH, via FMN and iron-sulfur (Fe-S) centers, to quinones in the respiratory chain. The immediate electron acceptor for the enzyme in this species is believed to be ubiquinone. Couples the redox reaction to proton translocation (for every two electrons transferred, four hydrogen ions are translocated across the cytoplasmic membrane), and thus conserves the redox energy in a proton gradient. This subunit may bind ubiquinone. In Dehalococcoides mccartyi (strain ATCC BAA-2266 / KCTC 15142 / 195) (Dehalococcoides ethenogenes (strain 195)), this protein is NADH-quinone oxidoreductase subunit H.